We begin with the raw amino-acid sequence, 156 residues long: Small ribosomal subunit protein uS7 (156 aa).

Belongs to the universal ribosomal protein uS7 family. Part of the 30S ribosomal subunit. Contacts proteins S9 and S11.

One of the primary rRNA binding proteins, it binds directly to 16S rRNA where it nucleates assembly of the head domain of the 30S subunit. Is located at the subunit interface close to the decoding center, probably blocks exit of the E-site tRNA. The chain is Small ribosomal subunit protein uS7 from Dictyoglomus thermophilum (strain ATCC 35947 / DSM 3960 / H-6-12).